A 469-amino-acid chain; its full sequence is MIKRLPDDFIFGGATAAYQAEGATTIDGKGAVAWDRYLKDNYWYTAEPASDFYHQYPIDLALAEQFGINGIRISIAWSRIFPEGFGEVNAKGVAFYHSLFAECHKHHVEPFVTLHHFDTPEALHSRGDFLNRENIDHFVAYAAYCFKEFPEVSYWTTFNEIGPIGDGQYLVGKFPPGISYDLAKVFQSHHNMMLAHARALVHYKEQAYPGEIGIVHALPTKYPLDPTNPADVLAAELDDIIHNKFILDATYLGQYSEKTMAGVKHILAENGGSLDLRPEDFELLQAAKDLNDFLGINYYMSDWLRAFDGETEIIHNGKGEKGGSKYQIKGVGQRIFDVDVPRTDWDWMIYPQGLYDQIMRIKADYPGYKKIYITENGLGYKDTCIDGRIDDDARIDYIKQHLAVIADVISAGANVKGYFIWSLMDVFSWSNGYDKRYGLFYVDFETQKRYPKKSAYWYQQLAATKTISV.

Positions 19, 116, 159, 160, and 297 each coordinate D-galactose 6-phosphate. The Proton donor role is filled by Glu160. Glu375 functions as the Nucleophile in the catalytic mechanism. Positions 428, 429, 435, and 437 each coordinate D-galactose 6-phosphate.

Belongs to the glycosyl hydrolase 1 family.

It carries out the reaction a 6-phospho-beta-D-galactoside + H2O = D-galactose 6-phosphate + an alcohol. It participates in carbohydrate metabolism; lactose degradation; D-galactose 6-phosphate and beta-D-glucose from lactose 6-phosphate: step 1/1. This Streptococcus equi subsp. zooepidemicus (strain MGCS10565) protein is 6-phospho-beta-galactosidase.